We begin with the raw amino-acid sequence, 309 residues long: Branched-chain-amino-acid aminotransferase (309 aa).

K160 carries the post-translational modification N6-(pyridoxal phosphate)lysine.

It belongs to the class-IV pyridoxal-phosphate-dependent aminotransferase family. As to quaternary structure, homohexamer. The cofactor is pyridoxal 5'-phosphate.

The enzyme catalyses L-leucine + 2-oxoglutarate = 4-methyl-2-oxopentanoate + L-glutamate. It catalyses the reaction L-isoleucine + 2-oxoglutarate = (S)-3-methyl-2-oxopentanoate + L-glutamate. It carries out the reaction L-valine + 2-oxoglutarate = 3-methyl-2-oxobutanoate + L-glutamate. Its pathway is amino-acid biosynthesis; L-isoleucine biosynthesis; L-isoleucine from 2-oxobutanoate: step 4/4. It participates in amino-acid biosynthesis; L-leucine biosynthesis; L-leucine from 3-methyl-2-oxobutanoate: step 4/4. The protein operates within amino-acid biosynthesis; L-valine biosynthesis; L-valine from pyruvate: step 4/4. Acts on leucine, isoleucine and valine. The polypeptide is Branched-chain-amino-acid aminotransferase (ilvE) (Escherichia coli O157:H7).